Here is a 147-residue protein sequence, read N- to C-terminus: MIRVLIERIDKDLPLPNYATHGSAALDLYSRIDFELPPFGEIGGGLVIPTGIRIALPEGYLALVLPRSGLAAREGISVLNTPGLIDSDYRGEIFVNLINFSNKPFLGKRGMRIAQLLVLQYSRIIWEEVEQLPQTERGEGGLGSTGL.

Substrate is bound by residues 67–69 (RSG), Asn-80, and 84–86 (LID).

It belongs to the dUTPase family. Requires Mg(2+) as cofactor.

The enzyme catalyses dUTP + H2O = dUMP + diphosphate + H(+). Its pathway is pyrimidine metabolism; dUMP biosynthesis; dUMP from dCTP (dUTP route): step 2/2. Functionally, this enzyme is involved in nucleotide metabolism: it produces dUMP, the immediate precursor of thymidine nucleotides and it decreases the intracellular concentration of dUTP so that uracil cannot be incorporated into DNA. This is Deoxyuridine 5'-triphosphate nucleotidohydrolase from Dictyoglomus turgidum (strain DSM 6724 / Z-1310).